Consider the following 294-residue polypeptide: Small ribosomal subunit protein uS2 (294 aa).

Over residues 232–245 (RAAEQDKAADDKAQ) the composition is skewed to basic and acidic residues. Residues 232-294 (RAAEQDKAAD…GSEEDGEAAN (63 aa)) form a disordered region. The segment covering 246–265 (EQAAAEAAKPEPAAPAPAAE) has biased composition (low complexity).

Belongs to the universal ribosomal protein uS2 family.

This Desulfatibacillum aliphaticivorans protein is Small ribosomal subunit protein uS2.